A 378-amino-acid polypeptide reads, in one-letter code: Biotin synthase, mitochondrial (378 aa).

A mitochondrion-targeting transit peptide spans 1–26; it reads MMLVRSVFRSQLRPSVSGGLQSASCY. The region spanning 79-308 is the Radical SAM core domain; the sequence is REVQQCTLLS…KAMVRLSAGR (230 aa). C94, C98, and C101 together coordinate [4Fe-4S] cluster. Positions 138, 171, 231, and 303 each coordinate [2Fe-2S] cluster. Residues 357-378 form a disordered region; the sequence is PPSFSEDDSESENCEKVASASH.

The protein belongs to the radical SAM superfamily. Biotin synthase family. The cofactor is [4Fe-4S] cluster. [2Fe-2S] cluster is required as a cofactor.

The protein localises to the mitochondrion. It carries out the reaction (4R,5S)-dethiobiotin + (sulfur carrier)-SH + 2 reduced [2Fe-2S]-[ferredoxin] + 2 S-adenosyl-L-methionine = (sulfur carrier)-H + biotin + 2 5'-deoxyadenosine + 2 L-methionine + 2 oxidized [2Fe-2S]-[ferredoxin]. It functions in the pathway cofactor biosynthesis; biotin biosynthesis; biotin from 7,8-diaminononanoate: step 2/2. The polypeptide is Biotin synthase, mitochondrial (BIO2) (Arabidopsis thaliana (Mouse-ear cress)).